Here is a 623-residue protein sequence, read N- to C-terminus: Interferon-induced GTP-binding protein Mx3 (623 aa).

The Dynamin-type G domain occupies D31–P304. Residues G41–S48 are G1 motif. GTP is bound at residue G41 to S48. Residues V66 to R68 are G2 motif. Residues D142–G145 are G3 motif. GTP contacts are provided by residues D142–I146 and T211–D214. The tract at residues T211 to D214 is G4 motif. Residues K243 to G246 form a G5 motif region. One can recognise a GED domain in the interval L537 to F623.

It belongs to the TRAFAC class dynamin-like GTPase superfamily. Dynamin/Fzo/YdjA family.

It is found in the cytoplasm. In terms of biological role, does not inhibit strain RB-1 of the fish pathogen, infectious hematopoietic necrosis virus (IHNV). The sequence is that of Interferon-induced GTP-binding protein Mx3 from Oncorhynchus mykiss (Rainbow trout).